A 114-amino-acid polypeptide reads, in one-letter code: Iron-sulfur cluster insertion protein ErpA (114 aa).

Iron-sulfur cluster contacts are provided by cysteine 42, cysteine 106, and cysteine 108.

The protein belongs to the HesB/IscA family. Homodimer. Requires iron-sulfur cluster as cofactor.

In terms of biological role, required for insertion of 4Fe-4S clusters for at least IspG. This is Iron-sulfur cluster insertion protein ErpA from Shigella boydii serotype 18 (strain CDC 3083-94 / BS512).